The following is a 458-amino-acid chain: Probable threonine--tRNA ligase, cytoplasmic (458 aa).

The TGS domain occupies 41-104 (DPIKITLLPD…EGDCSLEIFG (64 aa)).

Belongs to the class-II aminoacyl-tRNA synthetase family.

The protein localises to the cytoplasm. The catalysed reaction is tRNA(Thr) + L-threonine + ATP = L-threonyl-tRNA(Thr) + AMP + diphosphate + H(+). The polypeptide is Probable threonine--tRNA ligase, cytoplasmic (Arabidopsis thaliana (Mouse-ear cress)).